Reading from the N-terminus, the 264-residue chain is Small ribosomal subunit protein mS23 (264 aa).

Residues 233–264 (ARTSNPAGSWKDDTTLNTAQEEESTTSENLHF) are disordered.

The protein belongs to the mitochondrion-specific ribosomal protein mS23 family. As to quaternary structure, component of the mitochondrial small ribosomal subunit. Mature mitochondrial ribosomes consist of a small (37S) and a large (54S) subunit. The 37S subunit contains at least 33 different proteins and 1 molecule of RNA (15S). The 54S subunit contains at least 45 different proteins and 1 molecule of RNA (21S).

The protein resides in the mitochondrion. This Saccharomyces cerevisiae (strain YJM789) (Baker's yeast) protein is Small ribosomal subunit protein mS23 (RSM25).